A 572-amino-acid chain; its full sequence is MGKPARWLKSVLLGKKPSKSSGSKDKERIVNGKEVVVISKIEESDVVSDLSSIGNAAVYTSGIVETQNLKHEDVSDDEIQVSEVQPTDSQDVASVPDDSLSESEKIQQEIAAVTVQAAYRGYLARRAFKILKGIIRLQALIRGHMVRRQAVSTLCCVMGIVRLQALARGREIRHSDIGVEVQRKCHLHHQPLENKANSVVDTHSYLGINKLTGNAFAQKLLASSPNVLPLSLDNDSSNSIWLENWSASCFWKPVPQPKKASLRKSQKKFASNPQIVEAEFARPKKSVRKVPSSNLDNSSVAQTSSELEKPKRSFRKVSTSQSVEPLPSMDNPQVDLEKVKRGLRKVHNPVVENSIQPQLVPQIAVEKPNGSLEESVNAFDEEKEDEVAETVVQQPEELIQTHTPLGTNESLDSTLVNQIEESEENVMAEEKEDVKEERTPKQNHKENSAGKENQKSGKKASSVTATQTAEFQESGNGNQTSSPGIPSYMQATKSAKAKLRLQGSSSPRQLGTTEKASRRYSLPSSGNSAKITSHSPKTRVSNSSGKSGNKTEKTLLSSREGNGKATPVEWKR.

The disordered stretch occupies residues 75–96 (SDDEIQVSEVQPTDSQDVASVP). Over residues 82 to 92 (SEVQPTDSQDV) the composition is skewed to polar residues. 2 consecutive IQ domains span residues 108-136 (QEIAAVTVQAAYRGYLARRAFKILKGIIR) and 137-154 (LQALIRGHMVRRQAVSTL). The interval 159 to 178 (GIVRLQALARGREIRHSDIG) is calmodulin-binding. Disordered stretches follow at residues 282-332 (RPKK…MDNP) and 399-572 (IQTH…EWKR). Polar residues-rich tracts occupy residues 291-305 (PSSNLDNSSVAQTSS) and 400-419 (QTHTPLGTNESLDSTLVNQI). A compositionally biased stretch (basic and acidic residues) spans 428 to 455 (AEEKEDVKEERTPKQNHKENSAGKENQK). Composition is skewed to polar residues over residues 459–493 (KASSVTATQTAEFQESGNGNQTSSPGIPSYMQATK), 502–514 (QGSSSPRQLGTTE), and 522–560 (LPSSGNSAKITSHSPKTRVSNSSGKSGNKTEKTLLSSRE).

Belongs to the IQD family. In terms of assembly, binds to multiple calmodulin (CaM) in the presence of Ca(2+) and CaM-like proteins.

The protein resides in the nucleus envelope. Its subcellular location is the cytoplasm. It is found in the cytoskeleton. Functionally, may be involved in cooperative interactions with calmodulins or calmodulin-like proteins. Recruits calmodulin proteins to microtubules, thus being a potential scaffold in cellular signaling and trafficking. May associate with nucleic acids and regulate gene expression at the transcriptional or post-transcriptional level. This Arabidopsis thaliana (Mouse-ear cress) protein is Protein IQ-DOMAIN 30.